We begin with the raw amino-acid sequence, 239 residues long: mRNA turnover protein 4 homolog (239 aa).

Positions 216 to 239 (QQMGDDLPESAPESEGESEEEDDS) are disordered. Acidic residues predominate over residues 221 to 239 (DLPESAPESEGESEEEDDS). A phosphoserine mark is found at serine 225, serine 229, and serine 233.

The protein belongs to the universal ribosomal protein uL10 family. As to quaternary structure, associates with the pre-60S ribosomal particle. Interacts with MINAS-60 (product of an alternative open reading frame of RBM10).

The protein localises to the nucleus. It localises to the nucleolus. It is found in the cytoplasm. Its function is as follows. Component of the ribosome assembly machinery. Nuclear paralog of the ribosomal protein P0, it binds pre-60S subunits at an early stage of assembly in the nucleolus, and is replaced by P0 in cytoplasmic pre-60S subunits and mature 80S ribosomes. This chain is mRNA turnover protein 4 homolog (MRTO4), found in Bos taurus (Bovine).